A 143-amino-acid polypeptide reads, in one-letter code: FIS1-related protein fis-1 (143 aa).

Residues 121–141 (LGLLGGAVAVVGGLVIAGLAF) traverse the membrane as a helical segment.

The protein belongs to the FIS1 family.

The protein resides in the mitochondrion outer membrane. The protein localises to the peroxisome membrane. Its function is as follows. Involved in the fragmentation of the mitochondrial network. Involved in perinuclear clustering of the mitochondrial network. Plays a role in removal of ultraviolet C radiation-induced mitochondrial DNA damage. May act, redundantly with fis-2, downstream of mitochondrial fission, before the fission products participate in either mitochondrial homeostasis, mitophagy, or apoptosis. The protein is FIS1-related protein fis-1 of Caenorhabditis elegans.